Reading from the N-terminus, the 275-residue chain is MSFIKETKKWYFIFLAVWTLIADVPFLFMLFTSFKTQSELLSGNTWQIPRQPTIGNFSTVLEGNFFTYLKNSVIAVSISVVLILIISSMAAFAFSRFKFALNNLLYSLIIAGMAIPIHVTLIPIYVLTNKIKLYDTVFALIGPYVALSLPMSIFILTEFMREIPLELEEAAKIDGCSMFRLYSDILLPLSAPALITVGIYNGTYLWNEFVFALVLTSSPTRRTLPLGIWDFQARYGSDIPAIMAFLTLSLLPMLIAYIFGQDKIIKGMMAGAVKG.

The next 6 membrane-spanning stretches (helical) occupy residues 11–31, 74–94, 108–128, 136–156, 185–205, and 239–259; these read YFIFLAVWTLIADVPFLFMLF, IAVSISVVLILIISSMAAFAF, LIIAGMAIPIHVTLIPIYVLT, TVFALIGPYVALSLPMSIFIL, ILLPLSAPALITVGIYNGTYL, and IPAIMAFLTLSLLPMLIAYIF. One can recognise an ABC transmembrane type-1 domain in the interval 69–260; the sequence is LKNSVIAVSI…LPMLIAYIFG (192 aa).

Belongs to the binding-protein-dependent transport system permease family. MalFG subfamily.

The protein resides in the cell membrane. In Caldicellulosiruptor sp. (strain Rt8B.4), this protein is Putative ABC transporter permease protein ORF2.